The following is a 511-amino-acid chain: Maturase K (511 aa).

The protein belongs to the intron maturase 2 family. MatK subfamily.

The protein resides in the plastid. It is found in the chloroplast. Usually encoded in the trnK tRNA gene intron. Probably assists in splicing its own and other chloroplast group II introns. The chain is Maturase K from Melica altissima (Siberian melic grass).